A 413-amino-acid polypeptide reads, in one-letter code: 1-deoxy-D-xylulose 5-phosphate reductoisomerase (413 aa).

Threonine 21, glycine 22, serine 23, isoleucine 24, glycine 47, and asparagine 127 together coordinate NADPH. Lysine 128 lines the 1-deoxy-D-xylulose 5-phosphate pocket. Glutamate 129 is an NADPH binding site. Aspartate 151 is a Mn(2+) binding site. The 1-deoxy-D-xylulose 5-phosphate site is built by serine 152, glutamate 153, serine 177, and histidine 200. Mn(2+) is bound at residue glutamate 153. Residue glycine 206 participates in NADPH binding. Residues serine 213, asparagine 218, lysine 219, and glutamate 222 each coordinate 1-deoxy-D-xylulose 5-phosphate. Glutamate 222 is a Mn(2+) binding site.

This sequence belongs to the DXR family. It depends on Mg(2+) as a cofactor. Mn(2+) is required as a cofactor.

The catalysed reaction is 2-C-methyl-D-erythritol 4-phosphate + NADP(+) = 1-deoxy-D-xylulose 5-phosphate + NADPH + H(+). The protein operates within isoprenoid biosynthesis; isopentenyl diphosphate biosynthesis via DXP pathway; isopentenyl diphosphate from 1-deoxy-D-xylulose 5-phosphate: step 1/6. Catalyzes the NADPH-dependent rearrangement and reduction of 1-deoxy-D-xylulose-5-phosphate (DXP) to 2-C-methyl-D-erythritol 4-phosphate (MEP). The chain is 1-deoxy-D-xylulose 5-phosphate reductoisomerase from Mycobacterium bovis (strain ATCC BAA-935 / AF2122/97).